The sequence spans 434 residues: MTDSTNNAHFTSEERARHLLERLSGTGADSVSIPGTRVTSRSFAEMTTLRIGAAPAGVVECSSAEAVAQVVSFLDAHTQPLLIVGGGSNLVVGEGDEVSQLVVVLMSAGGGEGGVDKKGAAEKSAEGDVMIDRETGVVRAFAGVEWDQLVAATVEAGLGGLECLSGIPGSVGATPVQNVGAYGAEVAQVLRRVQLYDRTRGELEWVDPSALDLGYRYSNLKFTSRAVVTAVEFQLTTDGLSVPLRFGELARRLGVDADEAAAGEIRRPATDVRQAVLELRAGKGMVLDSADHDTWSAGSFFTNPIVTGEEARDAVVAAVREKCGDAEAESMPLYSVKSSGGDASGGGAGASVGEPQYKFSAAWLIERAGFAKGWHVPGNERASLSTKHTLALTNRGSATSADVVELARAVRTGVREAFGVVLEPEPIWVGVSID.

Residues 51–238 enclose the FAD-binding PCMH-type domain; the sequence is IGAAPAGVVE…TAVEFQLTTD (188 aa). R216 is an active-site residue. The active-site Proton donor is the S299. Residue E425 is part of the active site.

Belongs to the MurB family. FAD is required as a cofactor.

It localises to the cytoplasm. The enzyme catalyses UDP-N-acetyl-alpha-D-muramate + NADP(+) = UDP-N-acetyl-3-O-(1-carboxyvinyl)-alpha-D-glucosamine + NADPH + H(+). It participates in cell wall biogenesis; peptidoglycan biosynthesis. In terms of biological role, cell wall formation. This is UDP-N-acetylenolpyruvoylglucosamine reductase from Corynebacterium jeikeium (strain K411).